Reading from the N-terminus, the 68-residue chain is Pleurocidin (68 aa).

The signal sequence occupies residues 1–22 (MKFTATFLMIAIFVLMVEPGEC). The propeptide occupies 48 to 68 (GDKQELNKRAVDEDPNVIVFE).

It belongs to the pleurocidin family. In terms of tissue distribution, goblet cells.

It is found in the secreted. Functionally, antimicrobial peptide with potent activity against Gram-positive and Gram-negative bacteria. Activity against E.coli and B.subtilis. Weaker activity against L.mucor, s.marcescens and P.aeruginosa. May play a role in innate host defense. The chain is Pleurocidin (ple2) from Pseudopleuronectes americanus (Winter flounder).